We begin with the raw amino-acid sequence, 96 residues long: Small ribosomal subunit protein uS17 (96 aa).

This sequence belongs to the universal ribosomal protein uS17 family. Part of the 30S ribosomal subunit.

Its function is as follows. One of the primary rRNA binding proteins, it binds specifically to the 5'-end of 16S ribosomal RNA. In Deinococcus radiodurans (strain ATCC 13939 / DSM 20539 / JCM 16871 / CCUG 27074 / LMG 4051 / NBRC 15346 / NCIMB 9279 / VKM B-1422 / R1), this protein is Small ribosomal subunit protein uS17.